The chain runs to 846 residues: Interleukin cytokine receptor-related protein 1 (846 aa).

The first 25 residues, 1 to 25 (MFLHSPALLIWLFLFCLAGPQAVRT), serve as a signal peptide directing secretion. Residues 26–418 (EPYNSTSSSS…KEDTTWTWHT (393 aa)) are Extracellular-facing. N-linked (GlcNAc...) asparagine glycans are attached at residues asparagine 29, asparagine 79, asparagine 186, asparagine 214, asparagine 339, and asparagine 395. A disordered region spans residues 388–409 (EKPPATSNQTEESDGKAEKDKK). The segment covering 400–409 (SDGKAEKDKK) has biased composition (basic and acidic residues). A helical membrane pass occupies residues 419–439 (YAITGGAIIAILFILSVCAGL). Residues 440 to 846 (KCYKKFNNKK…AFHDEVIGIH (407 aa)) are Cytoplasmic-facing. One can recognise an SEFIR domain in the interval 476–618 (SISVLIVYSH…IPNSLMTMTT (143 aa)). Positions 737–771 (GPIHVEPTEPEVLEPAEEPMEEAEEDEEDEDDVDS) are disordered. The segment covering 744-771 (TEPEVLEPAEEPMEEAEEDEEDEDDVDS) has biased composition (acidic residues).

In terms of assembly, component of a heterodimeric receptor complex composed of ilcr-1 and ilcr-2. The receptor complex interacts with actl-1 and ilc-17.1 with the interaction being mediated by ilcr-2. Expressed in most neurons.

It is found in the cell membrane. Functionally, forms a receptor complex together with receptor ilcr-2, which upon activation acts as a modulator of neuronal activity. Binding of the ligand ilc-17.1 to the ilcr-1/2 receptor complex triggers a signaling cascade that activates the downstream signaling components actl-1, pik-1 and nfki-1, and results in increased neuronal activity in RMG interneurons in response to input from oxygen-sensing neurons. This leads to increased animal movement and promotes aggregation behavior. The chain is Interleukin cytokine receptor-related protein 1 from Caenorhabditis elegans.